Here is a 234-residue protein sequence, read N- to C-terminus: Glucosamine-6-phosphate deaminase (234 aa).

Asp63 functions as the Proton acceptor; for enolization step in the catalytic mechanism. Catalysis depends on Asn129, which acts as the For ring-opening step. His131 serves as the catalytic Proton acceptor; for ring-opening step. Glu136 (for ring-opening step) is an active-site residue.

The protein belongs to the glucosamine/galactosamine-6-phosphate isomerase family. NagB subfamily.

The catalysed reaction is alpha-D-glucosamine 6-phosphate + H2O = beta-D-fructose 6-phosphate + NH4(+). The protein operates within amino-sugar metabolism; N-acetylneuraminate degradation; D-fructose 6-phosphate from N-acetylneuraminate: step 5/5. Catalyzes the reversible isomerization-deamination of glucosamine 6-phosphate (GlcN6P) to form fructose 6-phosphate (Fru6P) and ammonium ion. The sequence is that of Glucosamine-6-phosphate deaminase from Listeria monocytogenes serotype 4a (strain HCC23).